The following is a 69-amino-acid chain: Conotoxin Lp3.1 (69 aa).

Residues 1–20 (MLKMGVLLFIFLVLFPLTTL) form the signal peptide. Positions 21–54 (ELDTDRPVERHAAIKQDLKPQERRGIRLHAPRDE) are excised as a propeptide. Cystine bridges form between Cys55–Cys67, Cys56–Cys65, and Cys61–Cys68.

This sequence belongs to the conotoxin M superfamily. Expressed by the venom duct.

It is found in the secreted. In Conus leopardus (Leopard cone), this protein is Conotoxin Lp3.1.